A 188-amino-acid polypeptide reads, in one-letter code: Elongation factor P (188 aa).

K34 bears the N6-(3,6-diaminohexanoyl)-5-hydroxylysine mark.

Belongs to the elongation factor P family. In terms of processing, may be beta-lysylated on the epsilon-amino group of Lys-34 by the combined action of EpmA and EpmB, and then hydroxylated on the C5 position of the same residue by EpmC (if this protein is present). Lysylation is critical for the stimulatory effect of EF-P on peptide-bond formation. The lysylation moiety may extend toward the peptidyltransferase center and stabilize the terminal 3-CCA end of the tRNA. Hydroxylation of the C5 position on Lys-34 may allow additional potential stabilizing hydrogen-bond interactions with the P-tRNA.

The protein localises to the cytoplasm. The protein operates within protein biosynthesis; polypeptide chain elongation. Functionally, involved in peptide bond synthesis. Alleviates ribosome stalling that occurs when 3 or more consecutive Pro residues or the sequence PPG is present in a protein, possibly by augmenting the peptidyl transferase activity of the ribosome. Modification of Lys-34 is required for alleviation. The protein is Elongation factor P of Coxiella burnetii (strain CbuG_Q212) (Coxiella burnetii (strain Q212)).